The primary structure comprises 437 residues: UDP-N-acetylmuramate--L-alanine ligase (437 aa).

Residue 108 to 114 (GAHGKTS) participates in ATP binding.

This sequence belongs to the MurCDEF family.

It localises to the cytoplasm. The enzyme catalyses UDP-N-acetyl-alpha-D-muramate + L-alanine + ATP = UDP-N-acetyl-alpha-D-muramoyl-L-alanine + ADP + phosphate + H(+). It participates in cell wall biogenesis; peptidoglycan biosynthesis. Cell wall formation. The chain is UDP-N-acetylmuramate--L-alanine ligase from Staphylococcus haemolyticus (strain JCSC1435).